A 187-amino-acid chain; its full sequence is Peptidyl-tRNA hydrolase (187 aa).

Tyr14 is a tRNA binding site. His19 (proton acceptor) is an active-site residue. 2 residues coordinate tRNA: Phe60 and Asn62.

This sequence belongs to the PTH family. In terms of assembly, monomer.

The protein localises to the cytoplasm. The catalysed reaction is an N-acyl-L-alpha-aminoacyl-tRNA + H2O = an N-acyl-L-amino acid + a tRNA + H(+). In terms of biological role, hydrolyzes ribosome-free peptidyl-tRNAs (with 1 or more amino acids incorporated), which drop off the ribosome during protein synthesis, or as a result of ribosome stalling. Its function is as follows. Catalyzes the release of premature peptidyl moieties from peptidyl-tRNA molecules trapped in stalled 50S ribosomal subunits, and thus maintains levels of free tRNAs and 50S ribosomes. In Pseudothermotoga lettingae (strain ATCC BAA-301 / DSM 14385 / NBRC 107922 / TMO) (Thermotoga lettingae), this protein is Peptidyl-tRNA hydrolase.